The primary structure comprises 67 residues: MNQEAAETARESLELVFRMSNILETGLDRHTLSVLIALCDIGLNPEALATLVKELRRDSATTTTTVD.

This sequence belongs to the MOZART1 family. Part of the gamma-tubulin complex. Interacts with GIP1 and GCP3. In terms of tissue distribution, mostly expressed in siliques and flowers, and, to a lower extent, in leaves, roots and seedlings, with highest levels in young tissues, meristematic cells, and the vasculature.

It localises to the cytoplasm. The protein resides in the cytoskeleton. It is found in the microtubule organizing center. Its subcellular location is the spindle. The protein localises to the nucleus. It localises to the phragmoplast. The protein resides in the nucleus envelope. Functionally, required for gamma-tubulin complex recruitment to the microtubule organizing centers (MTOCs). During mitosis, modulates gamma-tubulin complex localization, spindle stability and chromosomal segregation. Necessary for gametophyte development and embryogenesis. The sequence is that of Mitotic-spindle organizing protein 1A (GIP2) from Arabidopsis thaliana (Mouse-ear cress).